A 365-amino-acid chain; its full sequence is 1-aminocyclopropane-1-carboxylate oxidase homolog 9 (365 aa).

Residues 214–313 (KGLLMLCHYY…RISVACFVSS (100 aa)) enclose the Fe2OG dioxygenase domain. Fe cation contacts are provided by histidine 238, aspartate 240, and histidine 294. Arginine 304 provides a ligand contact to 2-oxoglutarate.

The protein belongs to the iron/ascorbate-dependent oxidoreductase family. It depends on Fe(2+) as a cofactor.

This Arabidopsis thaliana (Mouse-ear cress) protein is 1-aminocyclopropane-1-carboxylate oxidase homolog 9.